Here is a 44-residue protein sequence, read N- to C-terminus: Protein PsbN (44 aa).

A helical membrane pass occupies residues 6 to 26 (FFYGVFLWCLLISVTGYSIYI).

The protein belongs to the PsbN family.

The protein localises to the plastid. It is found in the chloroplast thylakoid membrane. May play a role in photosystem I and II biogenesis. The chain is Protein PsbN from Ostreococcus tauri.